Reading from the N-terminus, the 281-residue chain is Release factor glutamine methyltransferase (281 aa).

S-adenosyl-L-methionine contacts are provided by glutamate 141 and asparagine 185. Position 185–188 (185–188 (NPPY)) interacts with substrate.

This sequence belongs to the protein N5-glutamine methyltransferase family. PrmC subfamily.

It catalyses the reaction L-glutaminyl-[peptide chain release factor] + S-adenosyl-L-methionine = N(5)-methyl-L-glutaminyl-[peptide chain release factor] + S-adenosyl-L-homocysteine + H(+). In terms of biological role, methylates the class 1 translation termination release factors RF1/PrfA and RF2/PrfB on the glutamine residue of the universally conserved GGQ motif. The sequence is that of Release factor glutamine methyltransferase from Mycolicibacterium smegmatis (strain ATCC 700084 / mc(2)155) (Mycobacterium smegmatis).